Here is a 127-residue protein sequence, read N- to C-terminus: Large ribosomal subunit protein uL18 (127 aa).

It belongs to the universal ribosomal protein uL18 family. As to quaternary structure, part of the 50S ribosomal subunit; part of the 5S rRNA/L5/L18/L25 subcomplex. Contacts the 5S and 23S rRNAs.

This is one of the proteins that bind and probably mediate the attachment of the 5S RNA into the large ribosomal subunit, where it forms part of the central protuberance. The protein is Large ribosomal subunit protein uL18 of Streptomyces avermitilis (strain ATCC 31267 / DSM 46492 / JCM 5070 / NBRC 14893 / NCIMB 12804 / NRRL 8165 / MA-4680).